We begin with the raw amino-acid sequence, 469 residues long: Adenosylhomocysteinase (469 aa).

Residues T63, D139, and E164 each contribute to the substrate site. Residue T165–T167 participates in NAD(+) binding. Positions 194 and 198 each coordinate substrate. NAD(+)-binding positions include N199, G228–G233, E251, N300, I321–H323, and N375.

The protein belongs to the adenosylhomocysteinase family. Requires NAD(+) as cofactor.

It localises to the cytoplasm. It catalyses the reaction S-adenosyl-L-homocysteine + H2O = L-homocysteine + adenosine. It functions in the pathway amino-acid biosynthesis; L-homocysteine biosynthesis; L-homocysteine from S-adenosyl-L-homocysteine: step 1/1. May play a key role in the regulation of the intracellular concentration of adenosylhomocysteine. The chain is Adenosylhomocysteinase from Pseudomonas fluorescens (strain ATCC BAA-477 / NRRL B-23932 / Pf-5).